The sequence spans 324 residues: MEPLSEPDASDPILTITGPTAVGKTAVSLEAAEQLNAEIVSVDSRQVYEELTIGTAKPSPSEQRRAPHHFIGERSLHEPFSAGAYAKAANDRIRAVLERGRRPLVVGGATLYLHALQYGLADIPDVDDEVRDELNQRLESEGQDALYEELQQVDPRQAAETDPTKTQKVIRALEVYHGTGKPLSYYYENQPEPPFDYVTVVLNRDREKLYDRINQRVDRMLDAGLLDEVRDVMDIDGVQLDEPPLSTIGYREPIQHLKGDIDYDEMVRLVKRNTRRYAKRQLTWFRRYDEYHWRAAPETRAEDLIEVLKNALDPTHSAAEGSAR.

Position 18-25 (18-25) interacts with ATP; the sequence is GPTAVGKT. Residue 20–25 coordinates substrate; the sequence is TAVGKT. The tract at residues 43 to 46 is interaction with substrate tRNA; that stretch reads DSRQ.

It belongs to the IPP transferase family. As to quaternary structure, monomer. Mg(2+) is required as a cofactor.

The catalysed reaction is adenosine(37) in tRNA + dimethylallyl diphosphate = N(6)-dimethylallyladenosine(37) in tRNA + diphosphate. Catalyzes the transfer of a dimethylallyl group onto the adenine at position 37 in tRNAs that read codons beginning with uridine, leading to the formation of N6-(dimethylallyl)adenosine (i(6)A). This is tRNA dimethylallyltransferase from Salinibacter ruber (strain DSM 13855 / M31).